The sequence spans 88 residues: EMBRYO SURROUNDING FACTOR 1-like protein 7 (88 aa).

The N-terminal stretch at 1–22 is a signal peptide; that stretch reads MKSSHIALICIVMFSLFALHES. Intrachain disulfides connect C41-C57, C46-C85, C55-C81, and C58-C68.

It belongs to the MEG family. Expressed in leaves and flowers.

This is EMBRYO SURROUNDING FACTOR 1-like protein 7 (ESFL7) from Arabidopsis thaliana (Mouse-ear cress).